Consider the following 21-residue polypeptide: Fibrinogen beta chain (21 aa).

Gln1 carries the post-translational modification Pyrrolidone carboxylic acid. Acidic residues predominate over residues 1–10 (QFPTDYDEGQ). The interval 1–21 (QFPTDYDEGQDDRPKLGLGAR) is disordered. Thr4 carries an O-linked (GalNAc...) threonine glycan. At Tyr6 the chain carries Sulfotyrosine.

As to quaternary structure, heterohexamer; disulfide linked. Contains 2 sets of 3 non-identical chains (alpha, beta and gamma). The 2 heterotrimers are in head to head conformation with the N-termini in a small central domain. Conversion of fibrinogen to fibrin is triggered by thrombin, which cleaves fibrinopeptides A and B from alpha and beta chains, and thus exposes the N-terminal polymerization sites responsible for the formation of the soft clot.

Its subcellular location is the secreted. Cleaved by the protease thrombin to yield monomers which, together with fibrinogen alpha (FGA) and fibrinogen gamma (FGG), polymerize to form an insoluble fibrin matrix. Fibrin has a major function in hemostasis as one of the primary components of blood clots. In addition, functions during the early stages of wound repair to stabilize the lesion and guide cell migration during re-epithelialization. Was originally thought to be essential for platelet aggregation, based on in vitro studies using anticoagulated blood. However subsequent studies have shown that it is not absolutely required for thrombus formation in vivo. Enhances expression of SELP in activated platelets. Maternal fibrinogen is essential for successful pregnancy. Fibrin deposition is also associated with infection, where it protects against IFNG-mediated hemorrhage. May also facilitate the antibacterial immune response via both innate and T-cell mediated pathways. This chain is Fibrinogen beta chain (FGB), found in Bubalus bubalis (Domestic water buffalo).